A 265-amino-acid polypeptide reads, in one-letter code: 3-methyl-2-oxobutanoate hydroxymethyltransferase (265 aa).

2 residues coordinate Mg(2+): Asp45 and Asp84. 3-methyl-2-oxobutanoate-binding positions include 45-46 (DS), Asp84, and Lys112. Position 114 (Glu114) interacts with Mg(2+). Catalysis depends on Glu181, which acts as the Proton acceptor.

Belongs to the PanB family. Homodecamer; pentamer of dimers. It depends on Mg(2+) as a cofactor.

Its subcellular location is the cytoplasm. It catalyses the reaction 3-methyl-2-oxobutanoate + (6R)-5,10-methylene-5,6,7,8-tetrahydrofolate + H2O = 2-dehydropantoate + (6S)-5,6,7,8-tetrahydrofolate. It functions in the pathway cofactor biosynthesis; (R)-pantothenate biosynthesis; (R)-pantoate from 3-methyl-2-oxobutanoate: step 1/2. Catalyzes the reversible reaction in which hydroxymethyl group from 5,10-methylenetetrahydrofolate is transferred onto alpha-ketoisovalerate to form ketopantoate. The chain is 3-methyl-2-oxobutanoate hydroxymethyltransferase from Pectobacterium carotovorum subsp. carotovorum (strain PC1).